The chain runs to 480 residues: Cyclin L homolog cyl-1 (480 aa).

The interval 25–58 is disordered; sequence PKEQNGNVEPKKEEDEKFESTYKQNENTQITPSS. Residues 33–44 are compositionally biased toward basic and acidic residues; that stretch reads EPKKEEDEKFES. Polar residues predominate over residues 45-58; that stretch reads TYKQNENTQITPSS. The Cyclin N-terminal domain occupies 91–230; it reads PSLVDGLSKE…RRILATLGFV (140 aa). A disordered region spans residues 368–480; the sequence is KMAPDGEKST…ESSTPPRSRR (113 aa). Composition is skewed to basic and acidic residues over residues 384–409 and 418–442; these read KDSR…GKKE and NDRD…DEKK. Residues 443–453 show a composition bias toward basic residues; sequence DRRKRTRSRSR. Positions 454–472 are enriched in basic and acidic residues; it reads DRKDKNRNRDVGKRYRKES.

It belongs to the cyclin family.

In terms of biological role, involved in pre-mRNA splicing. Functions in association with cyclin-dependent kinases (CDKs). Involved in induction of expression of heat shock protein hsp-16.2 in response to heat shock. Plays a role in male tail development, perhaps acting together with cell cycle regulators cdc-25.2, cdk-1, cyb-3, and cyd-1. The chain is Cyclin L homolog cyl-1 from Caenorhabditis elegans.